A 153-amino-acid polypeptide reads, in one-letter code: SsrA-binding protein (153 aa).

It belongs to the SmpB family.

It localises to the cytoplasm. In terms of biological role, required for rescue of stalled ribosomes mediated by trans-translation. Binds to transfer-messenger RNA (tmRNA), required for stable association of tmRNA with ribosomes. tmRNA and SmpB together mimic tRNA shape, replacing the anticodon stem-loop with SmpB. tmRNA is encoded by the ssrA gene; the 2 termini fold to resemble tRNA(Ala) and it encodes a 'tag peptide', a short internal open reading frame. During trans-translation Ala-aminoacylated tmRNA acts like a tRNA, entering the A-site of stalled ribosomes, displacing the stalled mRNA. The ribosome then switches to translate the ORF on the tmRNA; the nascent peptide is terminated with the 'tag peptide' encoded by the tmRNA and targeted for degradation. The ribosome is freed to recommence translation, which seems to be the essential function of trans-translation. The chain is SsrA-binding protein from Paramagnetospirillum magneticum (strain ATCC 700264 / AMB-1) (Magnetospirillum magneticum).